The primary structure comprises 349 residues: UDP-N-acetylenolpyruvoylglucosamine reductase (349 aa).

Residues 26–197 form the FAD-binding PCMH-type domain; that stretch reads FDARARVAAR…VAVTFRLPKA (172 aa). Residue R173 is part of the active site. S249 functions as the Proton donor in the catalytic mechanism. E345 is an active-site residue.

Belongs to the MurB family. The cofactor is FAD.

It localises to the cytoplasm. It carries out the reaction UDP-N-acetyl-alpha-D-muramate + NADP(+) = UDP-N-acetyl-3-O-(1-carboxyvinyl)-alpha-D-glucosamine + NADPH + H(+). It participates in cell wall biogenesis; peptidoglycan biosynthesis. In terms of biological role, cell wall formation. The protein is UDP-N-acetylenolpyruvoylglucosamine reductase of Burkholderia pseudomallei (strain 1710b).